Here is a 354-residue protein sequence, read N- to C-terminus: Protein RecA (354 aa).

Residue 67 to 74 (GPESSGKT) coordinates ATP. A disordered region spans residues 333–354 (MNEFVPSSEEQAEASLSEDHDQ).

This sequence belongs to the RecA family.

It localises to the cytoplasm. In terms of biological role, can catalyze the hydrolysis of ATP in the presence of single-stranded DNA, the ATP-dependent uptake of single-stranded DNA by duplex DNA, and the ATP-dependent hybridization of homologous single-stranded DNAs. It interacts with LexA causing its activation and leading to its autocatalytic cleavage. The sequence is that of Protein RecA from Laribacter hongkongensis (strain HLHK9).